We begin with the raw amino-acid sequence, 359 residues long: N6-succino-2-amino-2'-deoxyadenylate synthase (359 aa).

The active-site Proton acceptor is the S23. ATP-binding residues include S23, T24, G25, K26, and G27. S23 is a binding site for dGMP. S23 serves as a coordination point for Mg(2+). N49 lines the dGMP pocket. Residues G51, H52, and T53 each contribute to the ATP site. G51 lines the Mg(2+) pocket. Positions 131, 132, and 146 each coordinate dGMP. Q190 lines the ATP pocket. T205 serves as a coordination point for dGMP. Position 274 (T274) interacts with Mg(2+). L-aspartate-binding residues include T274, V275, and R280. The ATP site is built by N305 and Q308.

Belongs to the Caudovirales PurZ family. It depends on Mg(2+) as a cofactor.

The catalysed reaction is dGMP + L-aspartate + ATP = (2S)-2-amino-2'-deoxyadenylo-succinate + ADP + phosphate + 2 H(+). It functions in the pathway purine metabolism. Involved in the synthesis of the atypical nucleotide dZTP (2-amino-2'-deoxyadenosine-5'-triphosphate). Catalyzes the condensation of aspartate with deoxyguanylate into dSMP (N6-succino-2-amino-2'-deoxyadenylate), which undergoes defumarylation and phosphorylation respectively by host PurB and guanylate/nucleoside diphosphate kinases to give dZTP. dZTP is integrated into the viral genome instead of adenine by the viral DNA polymerase. This Z-base probably completely replaces adenosine and forms a triple bond to the opposite T-base. The resulting non-standard viral DNA is called Z-genome. The chemically modified DNA is probably harder for the host bacteria to digest with nucleases or restriction enzymes. The sequence is that of N6-succino-2-amino-2'-deoxyadenylate synthase from Cyanophage S-2L (Cyanobacteria phage S-2L).